The primary structure comprises 311 residues: Homeobox protein CDX-2 (311 aa).

Ser60 bears the Phosphoserine mark. The segment at 111 to 151 (EYHAHHHPHHHPHHPAASPSCASGLLQTLNLGPPGPAATAA) is disordered. Residues 114–124 (AHHHPHHHPHH) are compositionally biased toward basic residues. Residues 185 to 215 (KDKYRVVYTDHQRLELEKEFHFSRYITIRRK) form an interaction with DNA region. The segment at residues 185 to 244 (KDKYRVVYTDHQRLELEKEFHFSRYITIRRKSELAATLGLSERQVKIWFQNRRAKERKIK) is a DNA-binding region (homeobox). The interaction with 5-mCpG DNA stretch occupies residues 227–241 (RQVKIWFQNRRAKER). The segment at 239 to 311 (KERKIKKKQQ…GGVLNSTVTQ (73 aa)) is disordered. Over residues 248–257 (QQQQQQQQQQ) the composition is skewed to low complexity. Over residues 258–268 (PPQPPPQPSQP) the composition is skewed to pro residues. Ser281 carries the phosphoserine; by CDK2 modification. Residues 281 to 293 (SPVTSLQGSVPGS) carry the 4S motif; modulates transactivation activity and protein stability motif. Low complexity predominate over residues 285 to 298 (SLQGSVPGSVPGVL).

Belongs to the Caudal homeobox family. In terms of assembly, can bind DNA as a monomer or homodimer. Post-translationally, ubiquitinated, leading to its degradation by the proteasome. Phosphorylation at Ser-60 reduces transactivation capacity. Phosphorylation at Ser-281 reduces transactivation capacity and increases ubiquitin-dependent proteasome degradation. In terms of tissue distribution, in the intestine, detected in ileum and proximal and distal colon (at protein level). In adult small intestine, predominantly localized in crypt and lower villus cells of the epithelium (at protein level). Expressed in the intestine but not detected in other tissues including stomach, liver, kidney, spleen, brain, heart, lung, pancreas, skeletal muscle and testis. Expressed specifically in gut epithelium where it is not restricted to a particular cell lineage. Abundant expression is seen in the proximal colon with slightly lower levels in distal colon. Expression in the proximal colon is not restricted either to a particular cell lineage or stage of differentiation while in the distal colon it is more abundant in the differentiated cells towards the top of the crypt.

The protein resides in the nucleus. Transcription factor which regulates the transcription of multiple genes expressed in the intestinal epithelium. Binds to the promoter of the intestinal sucrase-isomaltase SI and activates SI transcription. Binds to the DNA sequence 5'-ATAAAAACTTAT-3' in the promoter region of VDR and activates VDR transcription. Binds to and activates transcription of LPH. Activates transcription of CLDN2 and intestinal mucin MUC2. Binds to the 5'-AATTTTTTACAACACCT-3' DNA sequence in the promoter region of CA1 and activates CA1 transcription. Important in broad range of functions from early differentiation to maintenance of the intestinal epithelial lining of both the small and large intestine. Binds preferentially to methylated DNA. This Mus musculus (Mouse) protein is Homeobox protein CDX-2 (Cdx2).